The following is a 493-amino-acid chain: MSFKDLRSFIDHLEANGELKRIAHPVDPHLEMTEIADRVLRAKGPALLFENPVGKTMPVLANLFGTPKRVAMALGKEDPLALRDVGELLAFLKEPEPPRGFKDAISKIPMFKQALNMPPKTVRNAPCQEVVVSGDEVDLTKLPIQHCWPGDVAPLVTWGLTITKGPRQKRQNLGIYRQQLLGKNKLIMRWLDHRGGALDFKDFKEQHPGERYPVVVALGADPVTILGAVTPVPDAMSEYAFAGLLRGERTEVCKALSCDLEVPATSEIILEGYIEPGEMAEEGPYGDHTGYYNETDEFPVFTVTHVSHRRDAIYHSTYTGRPPDEPAMLGVALNEVFVPILRKQYPEIVDFYLPPEGCSYRMAVISIRKQYPGHAKRVMMGAWSFLRQFMYTKFIIIVDEDVNCRDWNDVIWAITTRMDPKRDTVMIDNTPIDYLDFASPVAGLGSKMGMDATNKWEGETDREWGTPIVMDEAVKQRIDAIWDDLGIDDAPTL.

N172 serves as a coordination point for Mn(2+). Residues 175 to 177 (IYR), 189 to 191 (RWL), and 194 to 195 (RG) contribute to the prenylated FMN site. E238 serves as a coordination point for Mn(2+). The Proton donor role is filled by D287.

Belongs to the UbiD family. As to quaternary structure, homohexamer. Prenylated FMN is required as a cofactor. It depends on Mn(2+) as a cofactor.

The protein localises to the cell membrane. The catalysed reaction is a 4-hydroxy-3-(all-trans-polyprenyl)benzoate + H(+) = a 2-(all-trans-polyprenyl)phenol + CO2. The protein operates within cofactor biosynthesis; ubiquinone biosynthesis. Its function is as follows. Catalyzes the decarboxylation of 3-octaprenyl-4-hydroxy benzoate to 2-octaprenylphenol, an intermediate step in ubiquinone biosynthesis. In Shewanella loihica (strain ATCC BAA-1088 / PV-4), this protein is 3-octaprenyl-4-hydroxybenzoate carboxy-lyase.